Consider the following 234-residue polypeptide: Phosphoribosylaminoimidazole-succinocarboxamide synthase (234 aa).

This sequence belongs to the SAICAR synthetase family.

It carries out the reaction 5-amino-1-(5-phospho-D-ribosyl)imidazole-4-carboxylate + L-aspartate + ATP = (2S)-2-[5-amino-1-(5-phospho-beta-D-ribosyl)imidazole-4-carboxamido]succinate + ADP + phosphate + 2 H(+). It functions in the pathway purine metabolism; IMP biosynthesis via de novo pathway; 5-amino-1-(5-phospho-D-ribosyl)imidazole-4-carboxamide from 5-amino-1-(5-phospho-D-ribosyl)imidazole-4-carboxylate: step 1/2. The polypeptide is Phosphoribosylaminoimidazole-succinocarboxamide synthase (Streptococcus pyogenes serotype M3 (strain ATCC BAA-595 / MGAS315)).